Reading from the N-terminus, the 264-residue chain is Zearalenone hydrolase (264 aa).

An AB hydrolase-1 domain is found at 27 to 207 (VLVPDGLGEC…KDLEALRGKP (181 aa)). Residues Gly-32, Ser-102, and Ser-103 each coordinate zearalenone. Residue Ser-102 is part of the active site. Glu-126 is a catalytic residue. 4 residues coordinate zearalenone: Trp-183, Tyr-187, Ser-220, and His-242. His-242 is an active-site residue.

It belongs to the AB hydrolase superfamily. Hydrolase RutD family. In terms of assembly, homodimer.

It carries out the reaction zearalenone + H2O = hydrolyzed zearalenone + H(+). In terms of biological role, lactonohydrolase that specifically hydrolyzes and deactivates the mycotoxin zearalenone (ZEN) and its zearalenol (ZOL) derivatives. ZHD101 prefers ZEN to ZOL as its substrate, but ZOL, especially the alpha-form, shows higher estrogenic toxicity than ZEN. This chain is Zearalenone hydrolase, found in Bionectria ochroleuca (Gliocladium roseum).